The primary structure comprises 325 residues: Golgi to ER traffic protein 4 homolog B (325 aa).

Disordered regions lie at residues 1–22 and 306–325; these read MAAA…GGVQ and SGED…IELD. Acidic residues predominate over residues 307–317; that stretch reads GEDDDVEDGQE.

This sequence belongs to the GET4 family. Component of the bag6/bat3 complex.

The protein resides in the cytoplasm. It localises to the cytosol. In terms of biological role, as part of a cytosolic protein quality control complex, the bag6/bat3 complex, maintains misfolded and hydrophobic patches-containing proteins in a soluble state and participates in their proper delivery to the endoplasmic reticulum or alternatively can promote their sorting to the proteasome where they undergo degradation. The bag6/bat3 complex is involved in the post-translational delivery of tail-anchored/type II transmembrane proteins to the endoplasmic reticulum membrane. Similarly, the bag6/bat3 complex also functions as a sorting platform for proteins of the secretory pathway that are mislocalized to the cytosol either delivering them to the proteasome for degradation or to the endoplasmic reticulum. The bag6/bat3 complex also plays a role in the endoplasmic reticulum-associated degradation (ERAD), a quality control mechanism that eliminates unwanted proteins of the endoplasmic reticulum through their retrotranslocation to the cytosol and their targeting to the proteasome. It maintains these retrotranslocated proteins in an unfolded yet soluble state condition in the cytosol to ensure their proper delivery to the proteasome. The protein is Golgi to ER traffic protein 4 homolog B (get4-b) of Xenopus laevis (African clawed frog).